The sequence spans 296 residues: NADH-cytochrome b5 reductase 2 (296 aa).

The chain crosses the membrane as a helical span at residues 2–24; it reads LVALAAIGVTVLLFLIKALGSGA. The FAD-binding FR-type domain occupies 35-147; that stretch reads NAKYPLPLIE…RGPNGLLVYK (113 aa). FAD-binding positions include 127–142 and 166–201; these read DSLKIGETIDFRGPNG and VAKHVGMLAGGTGITPMLQLIRQITQDPNDNTKCYL.

Belongs to the flavoprotein pyridine nucleotide cytochrome reductase family. It depends on FAD as a cofactor.

It localises to the membrane. It carries out the reaction 2 Fe(III)-[cytochrome b5] + NADH = 2 Fe(II)-[cytochrome b5] + NAD(+) + H(+). Functionally, NADH-cytochrome b5 reductases are involved in desaturation and elongation of fatty acids, cholesterol biosynthesis and drug metabolism. The chain is NADH-cytochrome b5 reductase 2 (cyb5r2) from Xenopus laevis (African clawed frog).